We begin with the raw amino-acid sequence, 425 residues long: Serine--tRNA ligase (425 aa).

233 to 235 lines the L-serine pocket; that stretch reads TAE. Residue 264-266 coordinates ATP; it reads RRE. Residue Glu287 coordinates L-serine. Residue 351-354 coordinates ATP; sequence EISS. Ser387 is a binding site for L-serine.

This sequence belongs to the class-II aminoacyl-tRNA synthetase family. Type-1 seryl-tRNA synthetase subfamily. In terms of assembly, homodimer. The tRNA molecule binds across the dimer.

The protein resides in the cytoplasm. The enzyme catalyses tRNA(Ser) + L-serine + ATP = L-seryl-tRNA(Ser) + AMP + diphosphate + H(+). The catalysed reaction is tRNA(Sec) + L-serine + ATP = L-seryl-tRNA(Sec) + AMP + diphosphate + H(+). Its pathway is aminoacyl-tRNA biosynthesis; selenocysteinyl-tRNA(Sec) biosynthesis; L-seryl-tRNA(Sec) from L-serine and tRNA(Sec): step 1/1. In terms of biological role, catalyzes the attachment of serine to tRNA(Ser). Is also able to aminoacylate tRNA(Sec) with serine, to form the misacylated tRNA L-seryl-tRNA(Sec), which will be further converted into selenocysteinyl-tRNA(Sec). In Thermotoga sp. (strain RQ2), this protein is Serine--tRNA ligase.